The sequence spans 336 residues: Phosphate acyltransferase (336 aa).

It belongs to the PlsX family. As to quaternary structure, homodimer. Probably interacts with PlsY.

It localises to the cytoplasm. The catalysed reaction is a fatty acyl-[ACP] + phosphate = an acyl phosphate + holo-[ACP]. It participates in lipid metabolism; phospholipid metabolism. Its function is as follows. Catalyzes the reversible formation of acyl-phosphate (acyl-PO(4)) from acyl-[acyl-carrier-protein] (acyl-ACP). This enzyme utilizes acyl-ACP as fatty acyl donor, but not acyl-CoA. This is Phosphate acyltransferase from Pseudomonas putida (strain ATCC 700007 / DSM 6899 / JCM 31910 / BCRC 17059 / LMG 24140 / F1).